Here is a 452-residue protein sequence, read N- to C-terminus: Scaffold protein ILK (452 aa).

ANK repeat units lie at residues 2–30, 31–63, 64–96, 97–129, and 130–174; these read DDIFTQCREGNAVAVRLWLDNTENDLNQG, DDHGFSPLHWACREGRSNVVDMLIMRGARINVM, NRGDDTPLHLAASHGHRDIVQKLIQFKADINAV, NEHGNTPLHYACFWGHDTVAEDLVGNGALVSIA, and NKYS…GTTR. One can recognise a Protein kinase domain in the interval 193-446; the sequence is LSLSQKLNEN…PKFDMIVPIL (254 aa). 6 residues coordinate ATP: Asn-200, Asn-202, Ser-204, His-270, Met-272, and Asn-279. Mg(2+) is bound at residue Asp-339. Lys-341 is an ATP binding site. A Nuclear localization signal motif is present at residues 363 to 371; it reads KKPEEINRR.

This sequence belongs to the protein kinase superfamily. TKL Ser/Thr protein kinase family. Interacts with PXN/PAXILLIN (via LD motif 4).

It localises to the cell junction. Its subcellular location is the focal adhesion. The protein localises to the cell membrane. The protein resides in the cell projection. It is found in the lamellipodium. It localises to the cytoplasm. Its subcellular location is the myofibril. The protein localises to the sarcomere. The protein resides in the nucleus. It is found in the cytoskeleton. It localises to the microtubule organizing center. Its subcellular location is the centrosome. The protein localises to the cell cortex. Scaffold protein which mediates protein-protein interactions during a range of cellular events including focal adhesion assembly, cell adhesion and cell migration. The chain is Scaffold protein ILK from Gallus gallus (Chicken).